The primary structure comprises 307 residues: Ribonuclease Z (307 aa).

Residues His63, His65, Asp67, His68, His141, Asp212, and His270 each coordinate Zn(2+). Catalysis depends on Asp67, which acts as the Proton acceptor.

Belongs to the RNase Z family. As to quaternary structure, homodimer. It depends on Zn(2+) as a cofactor.

It catalyses the reaction Endonucleolytic cleavage of RNA, removing extra 3' nucleotides from tRNA precursor, generating 3' termini of tRNAs. A 3'-hydroxy group is left at the tRNA terminus and a 5'-phosphoryl group is left at the trailer molecule.. Its function is as follows. Zinc phosphodiesterase, which displays some tRNA 3'-processing endonuclease activity. Probably involved in tRNA maturation, by removing a 3'-trailer from precursor tRNA. This chain is Ribonuclease Z, found in Bacillus cereus (strain ATCC 14579 / DSM 31 / CCUG 7414 / JCM 2152 / NBRC 15305 / NCIMB 9373 / NCTC 2599 / NRRL B-3711).